Here is a 197-residue protein sequence, read N- to C-terminus: ATP-dependent Clp protease proteolytic subunit (197 aa).

Ser-101 (nucleophile) is an active-site residue. Residue His-126 is part of the active site.

Belongs to the peptidase S14 family. Component of the chloroplastic Clp protease core complex.

The protein localises to the plastid. It localises to the chloroplast stroma. The catalysed reaction is Hydrolysis of proteins to small peptides in the presence of ATP and magnesium. alpha-casein is the usual test substrate. In the absence of ATP, only oligopeptides shorter than five residues are hydrolyzed (such as succinyl-Leu-Tyr-|-NHMec, and Leu-Tyr-Leu-|-Tyr-Trp, in which cleavage of the -Tyr-|-Leu- and -Tyr-|-Trp bonds also occurs).. Functionally, cleaves peptides in various proteins in a process that requires ATP hydrolysis. Has a chymotrypsin-like activity. Plays a major role in the degradation of misfolded proteins. In Daucus carota (Wild carrot), this protein is ATP-dependent Clp protease proteolytic subunit.